The primary structure comprises 217 residues: uncharacterized protein (217 aa).

The span at 59 to 76 (AQSTIQRTSSLPVPSSSN) shows a compositional bias: polar residues. Disordered stretches follow at residues 59–105 (AQST…ETAN) and 124–217 (KKSL…HISK). Serine 68 carries the phosphoserine modification. A Phosphothreonine modification is found at threonine 92. The segment covering 124 to 135 (KKSLERRVREEQ) has biased composition (basic and acidic residues). Acidic residues predominate over residues 136–147 (EEKTDNEDDNDV). A compositionally biased stretch (polar residues) spans 148-157 (EISTQESLEN). Positions 173–188 (LEDDIEGQEFSFDDQD) are enriched in acidic residues. Over residues 199–217 (WLSSQKQQGSPLTSDHISK) the composition is skewed to polar residues.

This is an uncharacterized protein from Schizosaccharomyces pombe (strain 972 / ATCC 24843) (Fission yeast).